The sequence spans 283 residues: Elongation factor Ts (283 aa).

Residues 80-83 (TDFV) are involved in Mg(2+) ion dislocation from EF-Tu.

It belongs to the EF-Ts family.

The protein localises to the cytoplasm. Its function is as follows. Associates with the EF-Tu.GDP complex and induces the exchange of GDP to GTP. It remains bound to the aminoacyl-tRNA.EF-Tu.GTP complex up to the GTP hydrolysis stage on the ribosome. This chain is Elongation factor Ts, found in Salmonella choleraesuis (strain SC-B67).